We begin with the raw amino-acid sequence, 154 residues long: Aspartate carbamoyltransferase regulatory chain (154 aa).

Residues Cys109, Cys114, Cys138, and Cys141 each contribute to the Zn(2+) site.

Belongs to the PyrI family. Contains catalytic and regulatory chains. The cofactor is Zn(2+).

Functionally, involved in allosteric regulation of aspartate carbamoyltransferase. This is Aspartate carbamoyltransferase regulatory chain from Photorhabdus laumondii subsp. laumondii (strain DSM 15139 / CIP 105565 / TT01) (Photorhabdus luminescens subsp. laumondii).